Reading from the N-terminus, the 328-residue chain is 4-hydroxythreonine-4-phosphate dehydrogenase (328 aa).

Substrate is bound by residues His-134 and Thr-135. Residues His-164, His-209, and His-264 each coordinate a divalent metal cation. Positions 272, 281, and 290 each coordinate substrate.

Belongs to the PdxA family. In terms of assembly, homodimer. It depends on Zn(2+) as a cofactor. Mg(2+) is required as a cofactor. Co(2+) serves as cofactor.

It is found in the cytoplasm. It carries out the reaction 4-(phosphooxy)-L-threonine + NAD(+) = 3-amino-2-oxopropyl phosphate + CO2 + NADH. It functions in the pathway cofactor biosynthesis; pyridoxine 5'-phosphate biosynthesis; pyridoxine 5'-phosphate from D-erythrose 4-phosphate: step 4/5. In terms of biological role, catalyzes the NAD(P)-dependent oxidation of 4-(phosphooxy)-L-threonine (HTP) into 2-amino-3-oxo-4-(phosphooxy)butyric acid which spontaneously decarboxylates to form 3-amino-2-oxopropyl phosphate (AHAP). The protein is 4-hydroxythreonine-4-phosphate dehydrogenase of Shewanella denitrificans (strain OS217 / ATCC BAA-1090 / DSM 15013).